We begin with the raw amino-acid sequence, 190 residues long: Large ribosomal subunit protein eL15 (190 aa).

This sequence belongs to the eukaryotic ribosomal protein eL15 family.

This is Large ribosomal subunit protein eL15 (rpl15e) from Nanoarchaeum equitans (strain Kin4-M).